We begin with the raw amino-acid sequence, 332 residues long: Super small secreted glycoprotein (332 aa).

The first 33 residues, 1-33, serve as a signal peptide directing secretion; the sequence is MGSGYQLLQLPRERFRKTSFLVWVIILFQRAIS. A glycan (N-linked (GlcNAc...) asparagine; by host) is linked at Asn-41. 2 disulfide bridges follow: Cys-109–Cys-136 and Cys-122–Cys-148. N-linked (GlcNAc...) asparagine; by host glycosylation is found at Asn-205, Asn-229, Asn-239, Asn-258, and Asn-269.

The protein belongs to the filoviruses glycoprotein family.

The protein localises to the secreted. This is Super small secreted glycoprotein (GP) from Reston ebolavirus (strain Reston-89) (REBOV).